A 389-amino-acid polypeptide reads, in one-letter code: Na(+)/H(+) antiporter NhaA (389 aa).

Transmembrane regions (helical) follow at residues Ile-17–Leu-37, Leu-59–Val-79, Ser-95–Phe-115, Val-124–Leu-144, Val-154–Phe-174, Ser-177–Leu-197, Leu-213–Ile-233, Phe-261–Leu-281, Pro-287–Phe-307, Ile-328–Leu-348, and Leu-363–Val-383.

The protein belongs to the NhaA Na(+)/H(+) (TC 2.A.33) antiporter family.

The protein resides in the cell inner membrane. It catalyses the reaction Na(+)(in) + 2 H(+)(out) = Na(+)(out) + 2 H(+)(in). In terms of biological role, na(+)/H(+) antiporter that extrudes sodium in exchange for external protons. This chain is Na(+)/H(+) antiporter NhaA, found in Shewanella sp. (strain ANA-3).